The following is a 185-amino-acid chain: Ribosome-recycling factor (185 aa).

It belongs to the RRF family.

The protein resides in the cytoplasm. Its function is as follows. Responsible for the release of ribosomes from messenger RNA at the termination of protein biosynthesis. May increase the efficiency of translation by recycling ribosomes from one round of translation to another. The polypeptide is Ribosome-recycling factor (Geobacillus sp. (strain WCH70)).